The following is a 122-amino-acid chain: Large ribosomal subunit protein bL12 (122 aa).

Belongs to the bacterial ribosomal protein bL12 family. Homodimer. Part of the ribosomal stalk of the 50S ribosomal subunit. Forms a multimeric L10(L12)X complex, where L10 forms an elongated spine to which 2 to 4 L12 dimers bind in a sequential fashion. Binds GTP-bound translation factors.

Forms part of the ribosomal stalk which helps the ribosome interact with GTP-bound translation factors. Is thus essential for accurate translation. In Staphylococcus aureus (strain Mu50 / ATCC 700699), this protein is Large ribosomal subunit protein bL12.